Reading from the N-terminus, the 261-residue chain is Pimeloyl-[acyl-carrier protein] methyl ester esterase (261 aa).

One can recognise an AB hydrolase-1 domain in the interval 16 to 241 (LVLIHGWGMN…QASHAPFISH (226 aa)). Residues Trp-22, 82 to 83 (SL), and 143 to 147 (FMTLQ) contribute to the substrate site. The Nucleophile role is filled by Ser-82. Catalysis depends on residues Asp-207 and His-235. A substrate-binding site is contributed by His-235.

Belongs to the AB hydrolase superfamily. Carboxylesterase BioH family. Monomer.

The protein resides in the cytoplasm. It carries out the reaction 6-carboxyhexanoyl-[ACP] methyl ester + H2O = 6-carboxyhexanoyl-[ACP] + methanol + H(+). The protein operates within cofactor biosynthesis; biotin biosynthesis. Its function is as follows. The physiological role of BioH is to remove the methyl group introduced by BioC when the pimeloyl moiety is complete. It allows to synthesize pimeloyl-ACP via the fatty acid synthetic pathway through the hydrolysis of the ester bonds of pimeloyl-ACP esters. The polypeptide is Pimeloyl-[acyl-carrier protein] methyl ester esterase (Aliivibrio salmonicida (strain LFI1238) (Vibrio salmonicida (strain LFI1238))).